The following is a 659-amino-acid chain: QWRF motif-containing protein 2 (659 aa).

Disordered regions lie at residues M1 to V125, S157 to G221, D291 to S317, R340 to I359, and S371 to N429. Positions S42–S72 are enriched in low complexity. Residues R90 to T102 are compositionally biased toward polar residues. A compositionally biased stretch (basic and acidic residues) spans S172 to K190. Composition is skewed to polar residues over residues S206–R216 and D291–V303. Composition is skewed to low complexity over residues G345–I359 and A401–R418. The short motif at Q468–F471 is the QWRF motif element.

It belongs to the QWRF family.

This is QWRF motif-containing protein 2 (QWRF2) from Arabidopsis thaliana (Mouse-ear cress).